Consider the following 135-residue polypeptide: uncharacterized protein (135 aa).

This is an uncharacterized protein from Bacillus subtilis (strain 168).